Consider the following 145-residue polypeptide: UPF0735 ACT domain-containing protein CPR_1404 (145 aa).

The 76-residue stretch at 69–144 (IFNMVVTHEK…GVEKVEFVAM (76 aa)) folds into the ACT domain.

It belongs to the UPF0735 family.

In Clostridium perfringens (strain SM101 / Type A), this protein is UPF0735 ACT domain-containing protein CPR_1404.